A 964-amino-acid polypeptide reads, in one-letter code: SKI family transcriptional corepressor 1 (964 aa).

Disordered regions lie at residues 45–72 (TQLG…SSAL), 278–365 (RTFS…GGSA), 414–461 (AGEP…WGHQ), 525–587 (AGGG…RKSS), 610–768 (REAY…GAAK), and 794–842 (LCTP…EDGL). Residues 283 to 310 (QGGGGGGANSGSGGAGKGGAGGGGGPGC) show a composition bias toward gly residues. The segment covering 345–355 (ALGLAAAASGP) has biased composition (low complexity). 2 stretches are compositionally biased toward gly residues: residues 356–365 (AGPGGPGGSA) and 417–440 (PKGG…GPGA). Positions 571 to 583 (SLGPLPPPPPPPA) are enriched in pro residues. The segment covering 652–661 (DTADEPEVDV) has biased composition (acidic residues). A compositionally biased stretch (basic and acidic residues) spans 798–808 (ETHEPDKEDNH). Positions 823–834 (DQRSVSQPSPAN) are enriched in polar residues. A coiled-coil region spans residues 853 to 921 (EKDIENLARE…DTLCNELDQE (69 aa)).

This sequence belongs to the SKI family. As to quaternary structure, interacts with SMAD1, SMAD2 and SMAD3. Interacts with LBX1. Expressed in brain with higher levels in embryo than adult. Expressed by migratory precursors of Purkinje cells in the postnatal brain. Also expressed in adult testis.

The protein localises to the nucleus. In terms of biological role, inhibits BMP signaling. Acts as a transcriptional corepressor of LBX1. This is SKI family transcriptional corepressor 1 (Skor1) from Mus musculus (Mouse).